A 941-amino-acid polypeptide reads, in one-letter code: Glycine dehydrogenase (decarboxylating) (941 aa).

Residue Lys-692 is modified to N6-(pyridoxal phosphate)lysine.

The protein belongs to the GcvP family. As to quaternary structure, the glycine cleavage system is composed of four proteins: P, T, L and H. Pyridoxal 5'-phosphate is required as a cofactor.

It catalyses the reaction N(6)-[(R)-lipoyl]-L-lysyl-[glycine-cleavage complex H protein] + glycine + H(+) = N(6)-[(R)-S(8)-aminomethyldihydrolipoyl]-L-lysyl-[glycine-cleavage complex H protein] + CO2. The glycine cleavage system catalyzes the degradation of glycine. The P protein binds the alpha-amino group of glycine through its pyridoxal phosphate cofactor; CO(2) is released and the remaining methylamine moiety is then transferred to the lipoamide cofactor of the H protein. The sequence is that of Glycine dehydrogenase (decarboxylating) from Mycobacterium tuberculosis (strain ATCC 25177 / H37Ra).